Here is a 107-residue protein sequence, read N- to C-terminus: Large ribosomal subunit protein uL24 (107 aa).

This sequence belongs to the universal ribosomal protein uL24 family. In terms of assembly, part of the 50S ribosomal subunit.

One of two assembly initiator proteins, it binds directly to the 5'-end of the 23S rRNA, where it nucleates assembly of the 50S subunit. Functionally, one of the proteins that surrounds the polypeptide exit tunnel on the outside of the subunit. The polypeptide is Large ribosomal subunit protein uL24 (Pelotomaculum thermopropionicum (strain DSM 13744 / JCM 10971 / SI)).